The sequence spans 339 residues: Glucokinase (339 aa).

16-21 (GDIGGT) contacts ATP.

The protein belongs to the bacterial glucokinase family.

The protein resides in the cytoplasm. It catalyses the reaction D-glucose + ATP = D-glucose 6-phosphate + ADP + H(+). This is Glucokinase from Rhizobium meliloti (strain 1021) (Ensifer meliloti).